Reading from the N-terminus, the 436-residue chain is Trigger factor (436 aa).

The PPIase FKBP-type domain maps to 161-246 (GMRVTMDFIG…LIKVEEQILP (86 aa)).

It belongs to the FKBP-type PPIase family. Tig subfamily.

The protein resides in the cytoplasm. The catalysed reaction is [protein]-peptidylproline (omega=180) = [protein]-peptidylproline (omega=0). Functionally, involved in protein export. Acts as a chaperone by maintaining the newly synthesized protein in an open conformation. Functions as a peptidyl-prolyl cis-trans isomerase. The sequence is that of Trigger factor from Aeromonas salmonicida (strain A449).